A 302-amino-acid polypeptide reads, in one-letter code: Stanniocalcin-2 (302 aa).

The first 24 residues, 1-24, serve as a signal peptide directing secretion; sequence MCAERLGQFMTLALVLATFDPARG. Residues 23–44 form a disordered region; that stretch reads RGTDATNPPEGPQDRSPQQKGR. N-linked (GlcNAc...) asparagine glycosylation is found at Asn-73 and Asn-74. The interval 217–302 is disordered; it reads RPPTAPPERQ…EQSEYSDIRR (86 aa). The span at 227–264 shows a compositional bias: basic and acidic residues; it reads PQVDRTKLSRAHHGEAGHHLPEPSSRETGRGAKGERGS. A phosphoserine mark is found at Ser-250 and Ser-251. Residue Thr-254 is modified to Phosphothreonine.

The protein belongs to the stanniocalcin family. In terms of assembly, homodimer; disulfide-linked.

Its subcellular location is the secreted. In terms of biological role, has an anti-hypocalcemic action on calcium and phosphate homeostasis. This Pongo abelii (Sumatran orangutan) protein is Stanniocalcin-2 (STC2).